The following is a 131-amino-acid chain: CLAVATA3/ESR (CLE)-related protein ESR1 (131 aa).

Positions 1–26 (MASRMGMVAIVSLFVCALAASTSVNA) are cleaved as a signal peptide. The interval 49–131 (RQQQQGGFIG…IGPPPLSDRY (83 aa)) is disordered. Pro-81 and Pro-84 each carry hydroxyproline. Pro-84 carries an O-linked (Ara...) hydroxyproline glycan.

The protein belongs to the CLV3/ESR signal peptide family. In terms of processing, the O-glycosylation (arabinosylation) of the hydroxyproline Pro-84 enhances binding affinity of the ESR1p peptide for its receptor. Seed endosperm.

It is found in the secreted. Its subcellular location is the extracellular space. Functionally, extracellular signal peptide that regulates cell fate. This chain is CLAVATA3/ESR (CLE)-related protein ESR1, found in Zea mays (Maize).